We begin with the raw amino-acid sequence, 70 residues long: Large ribosomal subunit protein bL31 (70 aa).

Zn(2+) contacts are provided by Cys16, Cys18, Cys37, and Cys40.

Belongs to the bacterial ribosomal protein bL31 family. Type A subfamily. Part of the 50S ribosomal subunit. Requires Zn(2+) as cofactor.

In terms of biological role, binds the 23S rRNA. This Histophilus somni (strain 2336) (Haemophilus somnus) protein is Large ribosomal subunit protein bL31.